We begin with the raw amino-acid sequence, 354 residues long: Tsukushi (354 aa).

The N-terminal stretch at Met-1–Thr-17 is a signal peptide. Positions Thr-18–Leu-59 constitute an LRRNT domain. 10 LRR repeats span residues Asp-60–Gly-81, Thr-86–Arg-107, Tyr-110–Ser-131, Pro-133–Thr-154, Ala-160–Ala-180, Thr-186–Pro-207, Leu-208–Gly-228, Gly-231–Glu-253, Gly-256–Ser-277, and Leu-281–His-302. N-linked (GlcNAc...) asparagine glycosylation is present at Asn-75. Asn-138 carries N-linked (GlcNAc...) asparagine glycosylation. Residue Asn-191 is glycosylated (N-linked (GlcNAc...) asparagine).

Interacts with FZD4 (via FZ domain); competes with WNT2B for binding to FZD4, inhibiting Wnt signaling and repressing peripheral eye development. Interacts with TGFB1; the interaction contributes to regulation of the hair cycle. Interacts with netrin. Interacts with CCN2. In terms of tissue distribution, expressed in macrophages in inflamed wounds with wound expression starting 2 days post-wounding (dpw) (at protein level). At 7 dpw, expressed from epidermis and extracellular matrix in the wound edge to neoepidermis and granulation tissue and in panniculus carnosus under the granulation tissue (at protein level). After fibrosis, disappears in the dermal area at 11 dpw (at protein level). Expressed in the hair follicle during morphogenesis and the hair cycle (at protein level). In embryonic brain, strong expression in the olfactory bulb, anterior olfactory nucleus, neocortex, piriform cortex, glial wedge, midline zipper glia, indusium griseum and the area surrounding the anterior commissure (AC) but not on AC axons (at protein level). In the adult eye, expressed in retinal layers, lens epithelium, and ciliary body where it is expressed predominantly in the inner non-pigmented layer. Expressed in almost all brain regions in the embryo, in the cortex and the lateral ventricle at P0 and is restricted to the subventricular zone and lateral nucleus of the amygdala in adults. Prominent expression in hippocampal regions from early postnatal stages until postnatal day 15 and gradually declines at later stages. Expressed in almost all bone regions in the femurs of juveniles. In the inner ear, accumulates in nonprosensory regions during early embryonic stages and in both nonprosensory and prosensory regions in late embryonic stages. In the adult ear, expressed in the organ of Corti, spiral ganglion cells, and the stria vascularis. Highly expressed in the liver where it is detected primarily in hepatocytes but not in non-parenchymal cells.

Its subcellular location is the secreted. Functionally, contributes to various developmental events and other processes such as wound healing and cholesterol homeostasis through its interactions with multiple signaling pathways. Wnt signaling inhibitor which competes with WNT2B for binding to Wnt receptor FZD4 and represses WNT2B-dependent development of the peripheral eye. Plays a role in regulating the hair cycle by controlling TGFB1 signaling. Required for the development of the anterior commissure in the brain by inhibiting neurite outgrowth. Essential for terminal differentiation of hippocampal neural stem cells. Plays a role in regulating bone elongation and bone mass by modulating growth plate chondrocyte function and overall body size. Required for development of the inner ear through its involvement in stereocilia formation in inner hair cells. Facilitates wound healing by inhibiting secretion of TGFB1 from macrophages which prevents myofibroblast differentiation, maintaining inflammatory cell quiescence. Plays a role in cholesterol homeostasis by reducing circulating high-density lipoprotein cholesterol, lowering cholesterol efflux capacity and decreasing cholesterol-to-bile acid conversion in the liver. In one study, shown to negatively regulate sympathetic innervation in brown fat, leading to reduced energy expenditure. In another study, shown not to affect brown fat thermogenic capacity, body weight gain or glucose homeostasis. The polypeptide is Tsukushi (Mus musculus (Mouse)).